The primary structure comprises 72 residues: Translation initiation factor IF-1 (72 aa).

One can recognise an S1-like domain in the interval 1-72; it reads MSKDDSIEFE…TKGRITYRMK (72 aa).

This sequence belongs to the IF-1 family. Component of the 30S ribosomal translation pre-initiation complex which assembles on the 30S ribosome in the order IF-2 and IF-3, IF-1 and N-formylmethionyl-tRNA(fMet); mRNA recruitment can occur at any time during PIC assembly.

The protein resides in the cytoplasm. Its function is as follows. One of the essential components for the initiation of protein synthesis. Stabilizes the binding of IF-2 and IF-3 on the 30S subunit to which N-formylmethionyl-tRNA(fMet) subsequently binds. Helps modulate mRNA selection, yielding the 30S pre-initiation complex (PIC). Upon addition of the 50S ribosomal subunit IF-1, IF-2 and IF-3 are released leaving the mature 70S translation initiation complex. This Xanthomonas campestris pv. campestris (strain 8004) protein is Translation initiation factor IF-1.